The following is a 207-amino-acid chain: Ribosomal RNA large subunit methyltransferase E (207 aa).

The S-adenosyl-L-methionine site is built by G61, W63, D81, D97, and D122. K162 (proton acceptor) is an active-site residue.

Belongs to the class I-like SAM-binding methyltransferase superfamily. RNA methyltransferase RlmE family.

The protein localises to the cytoplasm. It carries out the reaction uridine(2552) in 23S rRNA + S-adenosyl-L-methionine = 2'-O-methyluridine(2552) in 23S rRNA + S-adenosyl-L-homocysteine + H(+). Functionally, specifically methylates the uridine in position 2552 of 23S rRNA at the 2'-O position of the ribose in the fully assembled 50S ribosomal subunit. In Pseudomonas putida (strain ATCC 700007 / DSM 6899 / JCM 31910 / BCRC 17059 / LMG 24140 / F1), this protein is Ribosomal RNA large subunit methyltransferase E.